Here is a 321-residue protein sequence, read N- to C-terminus: LIMR family protein SELMODRAFT_432210 (321 aa).

The next 5 membrane-spanning stretches (helical) occupy residues 28–48 (KQLWWVVYIIDTVLVYLVIPF), 116–133 (CFSLSSNVTLMLIRLDLW), 139–159 (LCVFPTYVIALSILFTMFGGV), 240–260 (LVFGILGLALSIIWLLHILVF), and 284–304 (LLGTTPFAIFCYYFVMSVISG).

Belongs to the LIMR family.

It localises to the membrane. In Selaginella moellendorffii (Spikemoss), this protein is LIMR family protein SELMODRAFT_432210.